The primary structure comprises 314 residues: Malate dehydrogenase (314 aa).

NAD(+) is bound by residues 12–17 and D36; that span reads GAGFTG. 2 residues coordinate substrate: R87 and R93. Residues N100 and 123–125 contribute to the NAD(+) site; that span reads LTN. N125 serves as a coordination point for substrate. A Phosphoserine modification is found at S149. Substrate is bound at residue R156. H180 functions as the Proton acceptor in the catalytic mechanism.

This sequence belongs to the LDH/MDH superfamily. MDH type 3 family.

The catalysed reaction is (S)-malate + NAD(+) = oxaloacetate + NADH + H(+). Catalyzes the reversible oxidation of malate to oxaloacetate. The protein is Malate dehydrogenase of Halalkalibacterium halodurans (strain ATCC BAA-125 / DSM 18197 / FERM 7344 / JCM 9153 / C-125) (Bacillus halodurans).